A 498-amino-acid polypeptide reads, in one-letter code: Lysine--tRNA ligase (498 aa).

Mg(2+) contacts are provided by glutamate 407 and glutamate 414.

This sequence belongs to the class-II aminoacyl-tRNA synthetase family. As to quaternary structure, homodimer. Mg(2+) serves as cofactor.

It is found in the cytoplasm. It carries out the reaction tRNA(Lys) + L-lysine + ATP = L-lysyl-tRNA(Lys) + AMP + diphosphate. The sequence is that of Lysine--tRNA ligase from Rhizobium johnstonii (strain DSM 114642 / LMG 32736 / 3841) (Rhizobium leguminosarum bv. viciae).